Reading from the N-terminus, the 412-residue chain is Alpha-1-antiproteinase (412 aa).

Residues 1 to 24 form the signal peptide; that stretch reads MTPSISWGLLLLAGLFCLVPSFLA. Position 33 is a phosphoserine (serine 33). 4 N-linked (GlcNAc...) asparagine glycosylation sites follow: asparagine 100, asparagine 133, asparagine 264, and asparagine 313. The tract at residues 367 to 386 is RCL; that stretch reads AATVLQAVPMSMPPILNFNK. A Phosphoserine modification is found at serine 377.

Belongs to the serpin family. In terms of assembly, interacts with CELA2A. Interacts with ERGIC3 and LMAN1/ERGIC53. Interacts with PRSS1/Trypsin. Expressed not only in liver but also in kidney tubule cells, where it is regulated by androgens during development.

It localises to the secreted. In terms of biological role, inhibitor of serine proteases. Its primary target is elastase, but it also has a moderate affinity for plasmin and thrombin. The protein is Alpha-1-antiproteinase (Serpina1) of Mus caroli (Ryukyu mouse).